Consider the following 833-residue polypeptide: Prickle-like protein 1 (833 aa).

The segment at methionine 1 to serine 22 is disordered. The PET domain maps to phenylalanine 14–methionine 122. LIM zinc-binding domains are found at residues alanine 124–lysine 188, proline 189–glutamate 249, and tyrosine 250–histidine 313. Disordered regions lie at residues valine 312–cysteine 346, glutamate 432–arginine 456, cysteine 603–proline 702, cysteine 767–proline 786, and asparagine 805–serine 833. 2 stretches are compositionally biased toward basic and acidic residues: residues glutamate 432 to arginine 453 and cysteine 603 to methionine 614. The span at arginine 669 to lysine 680 shows a compositional bias: basic residues. Positions threonine 817–serine 833 are enriched in basic residues. Cysteine methyl ester is present on cysteine 830. The S-farnesyl cysteine moiety is linked to residue cysteine 830. A propeptide spans isoleucine 831–serine 833 (removed in mature form).

The protein belongs to the prickle / espinas / testin family. As to quaternary structure, interacts with dvl2/dsh and mapk8/jnk1.

The protein resides in the cell membrane. Functionally, acts in a planar cell polarity (PCP) complex; polarization along the apical/basal axis of epithelial cells. Regulates the polarized assembly of fibronectrin on the surface of the mesoderm during gastrulation. Essential for gastrulation cell movements, cooperating with dvl2/dsh to activate jnk. Acts together with tes to control axial elongation. This chain is Prickle-like protein 1, found in Xenopus tropicalis (Western clawed frog).